The sequence spans 405 residues: Tryptophan synthase beta chain (405 aa).

N6-(pyridoxal phosphate)lysine is present on K98.

This sequence belongs to the TrpB family. Tetramer of two alpha and two beta chains. Pyridoxal 5'-phosphate is required as a cofactor.

The catalysed reaction is (1S,2R)-1-C-(indol-3-yl)glycerol 3-phosphate + L-serine = D-glyceraldehyde 3-phosphate + L-tryptophan + H2O. The protein operates within amino-acid biosynthesis; L-tryptophan biosynthesis; L-tryptophan from chorismate: step 5/5. Functionally, the beta subunit is responsible for the synthesis of L-tryptophan from indole and L-serine. The sequence is that of Tryptophan synthase beta chain from Stenotrophomonas maltophilia (strain K279a).